The following is a 147-amino-acid chain: Lysozyme C, intestinal isozyme (147 aa).

A signal peptide spans 1-18 (MKAVLILGLLLLSVTVQG). The region spanning 19–147 (KKFEKCELAR…VSSYIRGCKL (129 aa)) is the C-type lysozyme domain. Disulfide bonds link C24/C145, C48/C133, C83/C99, and C95/C113. Residues E53 and D71 contribute to the active site.

The protein belongs to the glycosyl hydrolase 22 family.

The catalysed reaction is Hydrolysis of (1-&gt;4)-beta-linkages between N-acetylmuramic acid and N-acetyl-D-glucosamine residues in a peptidoglycan and between N-acetyl-D-glucosamine residues in chitodextrins.. Lysozymes have primarily a bacteriolytic function; those in tissues and body fluids are associated with the monocyte-macrophage system and enhance the activity of immunoagents. The polypeptide is Lysozyme C, intestinal isozyme (Bos taurus (Bovine)).